The following is a 380-amino-acid chain: ATPase ASNA1 homolog (380 aa).

ATP is bound at residue 48 to 55 (KGGVGKTT). Asp-77 is an active-site residue. Residues Glu-248 and Asn-275 each contribute to the ATP site.

Belongs to the arsA ATPase family. Homodimer.

The protein localises to the cytoplasm. The protein resides in the endoplasmic reticulum. ATPase required for the post-translational delivery of tail-anchored (TA) proteins to the endoplasmic reticulum. Recognizes and selectively binds the transmembrane domain of TA proteins in the cytosol. This complex then targets to the endoplasmic reticulum by membrane-bound receptors, where the tail-anchored protein is released for insertion. This process is regulated by ATP binding and hydrolysis. ATP binding drives the homodimer towards the closed dimer state, facilitating recognition of newly synthesized TA membrane proteins. ATP hydrolysis is required for insertion. Subsequently, the homodimer reverts towards the open dimer state, lowering its affinity for the membrane-bound receptor, and returning it to the cytosol to initiate a new round of targeting. This chain is ATPase ASNA1 homolog, found in Plasmodium chabaudi chabaudi.